The sequence spans 510 residues: NAD(P)H-quinone oxidoreductase subunit 2 B, chloroplastic (510 aa).

13 helical membrane passes run 24–44 (LLLF…GLIL), 57–77 (IPWL…ALLF), 99–119 (IFQF…VEYI), 124–144 (MAIT…MFLC), 150–170 (ITIF…SGYT), 183–203 (YLLM…WLYG), 227–247 (PGIS…LSPA), 295–315 (WHLL…LIAI), 323–343 (MLAY…IVGD), 347–367 (GYAS…GTFA), 395–415 (ALSS…AGFF), 418–438 (LHLF…IGLL), and 484–504 (MIVC…IIAI).

Belongs to the complex I subunit 2 family. In terms of assembly, NDH is composed of at least 16 different subunits, 5 of which are encoded in the nucleus.

Its subcellular location is the plastid. It is found in the chloroplast thylakoid membrane. The enzyme catalyses a plastoquinone + NADH + (n+1) H(+)(in) = a plastoquinol + NAD(+) + n H(+)(out). It catalyses the reaction a plastoquinone + NADPH + (n+1) H(+)(in) = a plastoquinol + NADP(+) + n H(+)(out). In terms of biological role, NDH shuttles electrons from NAD(P)H:plastoquinone, via FMN and iron-sulfur (Fe-S) centers, to quinones in the photosynthetic chain and possibly in a chloroplast respiratory chain. The immediate electron acceptor for the enzyme in this species is believed to be plastoquinone. Couples the redox reaction to proton translocation, and thus conserves the redox energy in a proton gradient. The sequence is that of NAD(P)H-quinone oxidoreductase subunit 2 B, chloroplastic from Liriodendron tulipifera (Tuliptree).